Here is a 353-residue protein sequence, read N- to C-terminus: Methylthioribose-1-phosphate isomerase (353 aa).

Residues 51–53, Arg-94, and Gln-203 contribute to the substrate site; that span reads RGA. Asp-244 (proton donor) is an active-site residue. 254–255 provides a ligand contact to substrate; that stretch reads NK.

Belongs to the eIF-2B alpha/beta/delta subunits family. MtnA subfamily.

The enzyme catalyses 5-(methylsulfanyl)-alpha-D-ribose 1-phosphate = 5-(methylsulfanyl)-D-ribulose 1-phosphate. The protein operates within amino-acid biosynthesis; L-methionine biosynthesis via salvage pathway; L-methionine from S-methyl-5-thio-alpha-D-ribose 1-phosphate: step 1/6. Catalyzes the interconversion of methylthioribose-1-phosphate (MTR-1-P) into methylthioribulose-1-phosphate (MTRu-1-P). The sequence is that of Methylthioribose-1-phosphate isomerase from Trichodesmium erythraeum (strain IMS101).